A 512-amino-acid chain; its full sequence is Glutathione-binding protein GsiB (512 aa).

A signal peptide spans 1-26 (MARAVHRSGLVALGIATALMASCAFA).

It belongs to the bacterial solute-binding protein 5 family. As to quaternary structure, the complex is composed of two ATP-binding proteins (GsiA), two transmembrane proteins (GsiC and GsiD) and a solute-binding protein (GsiB).

The protein resides in the periplasm. Functionally, part of the ABC transporter complex GsiABCD involved in glutathione import. Binds glutathione. The chain is Glutathione-binding protein GsiB from Escherichia coli O157:H7.